We begin with the raw amino-acid sequence, 189 residues long: Adenylate kinase (189 aa).

10 to 15 (GAGKGT) is an ATP binding site. Residues 30-59 (STGDIFRANVSGGTELGKKAQAYMDRGDLV) form an NMP region. Residues Thr31, Arg36, 57–59 (DLV), 85–88 (GFPR), and Gln92 each bind AMP. An LID region spans residues 126–136 (ERARIDNRSDD). Residue Arg127 participates in ATP binding. Residues Arg133 and Arg144 each coordinate AMP. Gly172 lines the ATP pocket.

Belongs to the adenylate kinase family. In terms of assembly, monomer.

The protein resides in the cytoplasm. The catalysed reaction is AMP + ATP = 2 ADP. The protein operates within purine metabolism; AMP biosynthesis via salvage pathway; AMP from ADP: step 1/1. Catalyzes the reversible transfer of the terminal phosphate group between ATP and AMP. Plays an important role in cellular energy homeostasis and in adenine nucleotide metabolism. The protein is Adenylate kinase of Thermobifida fusca (strain YX).